The following is a 487-amino-acid chain: Glutamate--tRNA ligase (487 aa).

The 'HIGH' region motif lies at 12–22 (PSPTGYMHVGN). The short motif at 249-253 (KLSKR) is the 'KMSKS' region element. K252 provides a ligand contact to ATP.

This sequence belongs to the class-I aminoacyl-tRNA synthetase family. Glutamate--tRNA ligase type 1 subfamily. As to quaternary structure, monomer.

The protein localises to the cytoplasm. It carries out the reaction tRNA(Glu) + L-glutamate + ATP = L-glutamyl-tRNA(Glu) + AMP + diphosphate. Functionally, catalyzes the attachment of glutamate to tRNA(Glu) in a two-step reaction: glutamate is first activated by ATP to form Glu-AMP and then transferred to the acceptor end of tRNA(Glu). This Clostridium novyi (strain NT) protein is Glutamate--tRNA ligase.